The sequence spans 561 residues: Lysine--tRNA ligase (561 aa).

The Mg(2+) site is built by glutamate 409 and glutamate 416.

This sequence belongs to the class-II aminoacyl-tRNA synthetase family. As to quaternary structure, homodimer. Mg(2+) serves as cofactor.

It localises to the cytoplasm. The catalysed reaction is tRNA(Lys) + L-lysine + ATP = L-lysyl-tRNA(Lys) + AMP + diphosphate. The sequence is that of Lysine--tRNA ligase from Trichormus variabilis (strain ATCC 29413 / PCC 7937) (Anabaena variabilis).